Here is a 3739-residue protein sequence, read N- to C-terminus: Pikromycin polyketide synthase component PikAII (3739 aa).

A Ketosynthase family 3 (KS3) 1 domain is found at 35-463 (GEPVAIVGMA…GTNAHVVLEE (429 aa)). Module stretches follow at residues 38 to 1517 (VAIV…EFLL) and 1542 to 3642 (VAIV…GHLL). The Acyl-thioester intermediate; for beta-ketoacyl synthase 1 activity role is filled by C208. Residues H343 and H383 each act as for beta-ketoacyl synthase 1 activity in the active site. Residues 572 to 877 (FVFPGQGTQW…ERLVTSLAEA (306 aa)) form an acyltransferase 1 region. S662 (acyl-ester intermediate; for acyltransferase 1 activity) is an active-site residue. Residues 1150–1343 (GTVLVTGAEE…VTSVAWSPWE (194 aa)) form a C2-type beta-ketoacyl reductase 1 region. Y1313 acts as the For C2-type beta-ketoacyl reductase 1 and probable racemase activities in catalysis. Residues 1445–1520 (RRMQELVREH…TLAEFLLAEI (76 aa)) enclose the Carrier 1 domain. Residue S1480 is modified to O-(pantetheine 4'-phosphoryl)serine. One can recognise a Ketosynthase family 3 (KS3) 2 domain in the interval 1539-1967 (DEPVAIVGMA…GTNAHIVLEE (429 aa)). C1712 serves as the catalytic Acyl-thioester intermediate; for beta-ketoacyl synthase 2 activity. Residues H1847 and H1887 each act as for beta-ketoacyl synthase 2 activity in the active site. Positions 2069-2374 (FVFPGQGTQW…HRLTTSLAEA (306 aa)) are acyltransferase 2. S2159 acts as the Acyl-ester intermediate; for acyltransferase 2 activity in catalysis. The tract at residues 2428-2553 (HPLLGAAVAL…GVLAARADRT (126 aa)) is N-terminal hotdog fold. Residues 2428–2703 (HPLLGAAVAL…LTVLPVDPAQ (276 aa)) form a dehydratase region. A PKS/mFAS DH domain is found at 2428 to 2705 (HPLLGAAVAL…VLPVDPAQLA (278 aa)). The Proton acceptor; for dehydratase activity role is filled by H2460. Residues 2567–2705 (AEPVDVDGLY…VLPVDPAQLA (139 aa)) form a C-terminal hotdog fold region. Catalysis depends on D2629, which acts as the Proton donor; for dehydratase activity. Residues 2959-3267 (GSLESLTAAP…QARHTGKVVL (309 aa)) are enoyl reductase. Residue Y3005 is the For enoyl reductase activity of the active site. NADP(+)-binding positions include 3092–3109 (LLVHSAAGGVGMAAVQLA), 3285–3288 (TGAL), 3309–3312 (SRRG), 3338–3339 (DV), K3388, and 3412–3413 (FS). A beta-ketoacyl reductase 2 region spans residues 3277 to 3458 (GTVLLTGGTG…LSLGWGLWAE (182 aa)). Y3427 acts as the For beta-ketoacyl reductase 2 activity in catalysis. One can recognise a Carrier 2 domain in the interval 3570–3645 (AHLRDLVRTH…ELAGHLLDEL (76 aa)). S3605 carries the post-translational modification O-(pantetheine 4'-phosphoryl)serine.

Homodimer. Pikromycin PKS consists of a combination of multimodular (PikAI and PikAII) and monomodular (PikAIII and PikAIV) polypeptides each coding for a functional synthase subunit which participates in 1 (monomodular) or 2 (multimodular) of the six FAS-like elongation steps required for formation of the polyketide. Module 1, 2, 3, 4, 5, and 6 participating in biosynthesis steps 1, 2, 3, 4, 5, and 6, respectively. It depends on pantetheine 4'-phosphate as a cofactor.

The enzyme catalyses 5 (S)-methylmalonyl-CoA + malonyl-CoA + 5 NADPH + 11 H(+) = 10-deoxymethynolide + 6 CO2 + 5 NADP(+) + 6 CoA + 2 H2O. It carries out the reaction 6 (S)-methylmalonyl-CoA + malonyl-CoA + 5 NADPH + 12 H(+) = narbonolide + 7 CO2 + 5 NADP(+) + 7 CoA + 2 H2O. It functions in the pathway antibiotic biosynthesis. In terms of biological role, involved in the biosynthesis of 12- and 14-membered ring macrolactone antibiotics such as methymycin/neomethymycin and pikromycin/narbomycin, respectively. Component of the pikromycin PKS which catalyzes the biosynthesis of both precursors 10-deoxymethynolide (12-membered ring macrolactone) and narbonolide (14-membered ring macrolactone). Chain elongation through PikAI, PikAII and PikAIII followed by thioesterase catalyzed termination results in the production of 10-deoxymethynolide, while continued elongation through PikAIV, followed by thioesterase (TE) catalyzed cyclization results in the biosynthesis of the narbonolide. This Streptomyces venezuelae protein is Pikromycin polyketide synthase component PikAII.